A 286-amino-acid polypeptide reads, in one-letter code: NH(3)-dependent NAD(+) synthetase (286 aa).

ATP is bound at residue 43–50; it reads GVSGGVDS. Residue D49 participates in Mg(2+) binding. R131 contacts deamido-NAD(+). Residue T151 participates in ATP binding. E156 is a binding site for Mg(2+). Deamido-NAD(+)-binding residues include K164 and D171. The ATP site is built by K180 and S202. A disordered region spans residues 257–286; it reads HEASSHKRSPPASPDLGEIKKHYKQHAGKK. 262–263 is a deamido-NAD(+) binding site; it reads HK. Positions 277–286 are enriched in basic residues; sequence KHYKQHAGKK.

The protein belongs to the NAD synthetase family. As to quaternary structure, homodimer.

The enzyme catalyses deamido-NAD(+) + NH4(+) + ATP = AMP + diphosphate + NAD(+) + H(+). It functions in the pathway cofactor biosynthesis; NAD(+) biosynthesis; NAD(+) from deamido-NAD(+) (ammonia route): step 1/1. Catalyzes the ATP-dependent amidation of deamido-NAD to form NAD. Uses ammonia as a nitrogen source. This Aeropyrum pernix (strain ATCC 700893 / DSM 11879 / JCM 9820 / NBRC 100138 / K1) protein is NH(3)-dependent NAD(+) synthetase.